The chain runs to 441 residues: Ribosomal protein uS12 methylthiotransferase RimO (441 aa).

Residues 8 to 118 (PKIGFVSLGC…VLQHVHHYVP (111 aa)) enclose the MTTase N-terminal domain. Positions 17, 53, 82, 150, 154, and 157 each coordinate [4Fe-4S] cluster. Residues 136–373 (LTPRHYAYLK…MQLQQQISAE (238 aa)) enclose the Radical SAM core domain. One can recognise a TRAM domain in the interval 376–441 (QEKVGREILV…DEYDLWGSRV (66 aa)).

This sequence belongs to the methylthiotransferase family. RimO subfamily. The cofactor is [4Fe-4S] cluster.

The protein localises to the cytoplasm. It carries out the reaction L-aspartate(89)-[ribosomal protein uS12]-hydrogen + (sulfur carrier)-SH + AH2 + 2 S-adenosyl-L-methionine = 3-methylsulfanyl-L-aspartate(89)-[ribosomal protein uS12]-hydrogen + (sulfur carrier)-H + 5'-deoxyadenosine + L-methionine + A + S-adenosyl-L-homocysteine + 2 H(+). Functionally, catalyzes the methylthiolation of an aspartic acid residue of ribosomal protein uS12. This Salmonella paratyphi A (strain ATCC 9150 / SARB42) protein is Ribosomal protein uS12 methylthiotransferase RimO.